The primary structure comprises 156 residues: Ribosomal RNA large subunit methyltransferase H (156 aa).

S-adenosyl-L-methionine contacts are provided by residues leucine 73, glycine 104, and 123 to 128; that span reads LSSLTL.

The protein belongs to the RNA methyltransferase RlmH family. As to quaternary structure, homodimer.

Its subcellular location is the cytoplasm. The catalysed reaction is pseudouridine(1915) in 23S rRNA + S-adenosyl-L-methionine = N(3)-methylpseudouridine(1915) in 23S rRNA + S-adenosyl-L-homocysteine + H(+). In terms of biological role, specifically methylates the pseudouridine at position 1915 (m3Psi1915) in 23S rRNA. In Ralstonia nicotianae (strain ATCC BAA-1114 / GMI1000) (Ralstonia solanacearum), this protein is Ribosomal RNA large subunit methyltransferase H.